A 204-amino-acid chain; its full sequence is Thiamine-phosphate synthase (204 aa).

Residues 28 to 32 and asparagine 60 each bind 4-amino-2-methyl-5-(diphosphooxymethyl)pyrimidine; that span reads QLRIK. Residues aspartate 61 and aspartate 80 each coordinate Mg(2+). Positions 99 and 128 each coordinate 4-amino-2-methyl-5-(diphosphooxymethyl)pyrimidine. 2-[(2R,5Z)-2-carboxy-4-methylthiazol-5(2H)-ylidene]ethyl phosphate-binding positions include glycine 157 and 177–178; that span reads VT.

The protein belongs to the thiamine-phosphate synthase family. Mg(2+) serves as cofactor.

The catalysed reaction is 2-[(2R,5Z)-2-carboxy-4-methylthiazol-5(2H)-ylidene]ethyl phosphate + 4-amino-2-methyl-5-(diphosphooxymethyl)pyrimidine + 2 H(+) = thiamine phosphate + CO2 + diphosphate. It carries out the reaction 2-(2-carboxy-4-methylthiazol-5-yl)ethyl phosphate + 4-amino-2-methyl-5-(diphosphooxymethyl)pyrimidine + 2 H(+) = thiamine phosphate + CO2 + diphosphate. The enzyme catalyses 4-methyl-5-(2-phosphooxyethyl)-thiazole + 4-amino-2-methyl-5-(diphosphooxymethyl)pyrimidine + H(+) = thiamine phosphate + diphosphate. The protein operates within cofactor biosynthesis; thiamine diphosphate biosynthesis; thiamine phosphate from 4-amino-2-methyl-5-diphosphomethylpyrimidine and 4-methyl-5-(2-phosphoethyl)-thiazole: step 1/1. Functionally, condenses 4-methyl-5-(beta-hydroxyethyl)thiazole monophosphate (THZ-P) and 2-methyl-4-amino-5-hydroxymethyl pyrimidine pyrophosphate (HMP-PP) to form thiamine monophosphate (TMP). The polypeptide is Thiamine-phosphate synthase (Rhizobium etli (strain ATCC 51251 / DSM 11541 / JCM 21823 / NBRC 15573 / CFN 42)).